The following is a 332-amino-acid chain: Pyrroline-5-carboxylate reductase (332 aa).

It belongs to the pyrroline-5-carboxylate reductase family.

The catalysed reaction is L-proline + NADP(+) = (S)-1-pyrroline-5-carboxylate + NADPH + 2 H(+). The enzyme catalyses L-proline + NAD(+) = (S)-1-pyrroline-5-carboxylate + NADH + 2 H(+). It participates in amino-acid biosynthesis; L-proline biosynthesis; L-proline from L-glutamate 5-semialdehyde: step 1/1. This Neurospora crassa (strain ATCC 24698 / 74-OR23-1A / CBS 708.71 / DSM 1257 / FGSC 987) protein is Pyrroline-5-carboxylate reductase (pro-1).